The sequence spans 396 residues: 1-deoxy-D-xylulose 5-phosphate reductoisomerase (396 aa).

The NADPH site is built by T10, G11, S12, I13, and N123. K124 provides a ligand contact to 1-deoxy-D-xylulose 5-phosphate. E125 is an NADPH binding site. D149 provides a ligand contact to Mn(2+). The 1-deoxy-D-xylulose 5-phosphate site is built by S150, E151, S185, and H208. A Mn(2+)-binding site is contributed by E151. G214 is a binding site for NADPH. 1-deoxy-D-xylulose 5-phosphate contacts are provided by S221, N226, K227, and E230. Residue E230 coordinates Mn(2+).

The protein belongs to the DXR family. Mg(2+) is required as a cofactor. It depends on Mn(2+) as a cofactor.

It carries out the reaction 2-C-methyl-D-erythritol 4-phosphate + NADP(+) = 1-deoxy-D-xylulose 5-phosphate + NADPH + H(+). Its pathway is isoprenoid biosynthesis; isopentenyl diphosphate biosynthesis via DXP pathway; isopentenyl diphosphate from 1-deoxy-D-xylulose 5-phosphate: step 1/6. Its function is as follows. Catalyzes the NADPH-dependent rearrangement and reduction of 1-deoxy-D-xylulose-5-phosphate (DXP) to 2-C-methyl-D-erythritol 4-phosphate (MEP). The sequence is that of 1-deoxy-D-xylulose 5-phosphate reductoisomerase from Shewanella sp. (strain MR-4).